The chain runs to 123 residues: WAP four-disulfide core domain protein 5 (123 aa).

The signal sequence occupies residues 1 to 24 (MRIQSLLLLGALLAVGSQLPAVFG). WAP domains follow at residues 27–73 (KGEK…CVPR) and 74–121 (VSVK…RDPA). Cystine bridges form between Cys-34/Cys-62, Cys-41/Cys-66, Cys-49/Cys-61, Cys-55/Cys-70, Cys-81/Cys-109, Cys-88/Cys-113, Cys-96/Cys-108, and Cys-102/Cys-117.

It localises to the secreted. Functionally, putative acid-stable proteinase inhibitor. The polypeptide is WAP four-disulfide core domain protein 5 (WFDC5) (Chlorocebus aethiops (Green monkey)).